The following is a 1260-amino-acid chain: Phosphatidylinositol 3,4,5-trisphosphate 5-phosphatase 2 (1260 aa).

An SH2 domain is found at tryptophan 25–valine 121. Over residues glutamate 126–serine 136 the composition is skewed to basic and acidic residues. The segment at glutamate 126–asparagine 178 is disordered. Serine 136 bears the Phosphoserine mark. A compositionally biased stretch (pro residues) spans proline 159 to proline 171. A phosphoserine mark is found at serine 243 and serine 355. The residue at position 888 (tyrosine 888) is a Phosphotyrosine. Serine 892 is modified (phosphoserine). Residues glycine 899–aspartate 1120 are disordered. Pro residues predominate over residues proline 940–alanine 952. The short motif at proline 946 to arginine 951 is the SH3-binding element. Residues alanine 953–glycine 967 are compositionally biased toward basic and acidic residues. The residue at position 960 (threonine 960) is a Phosphothreonine. Positions asparagine 985 to tyrosine 988 match the NPXY motif motif. Phosphotyrosine is present on tyrosine 988. 3 stretches are compositionally biased toward pro residues: residues leucine 998 to proline 1013, leucine 1050 to proline 1061, and leucine 1090 to proline 1108. Phosphoserine is present on serine 1133. Tyrosine 1164 carries the phosphotyrosine modification. Positions glutamate 1181–glutamate 1200 are disordered. Residues leucine 1198–lysine 1260 form the SAM domain. Serine 1259 bears the Phosphoserine mark.

This sequence belongs to the inositol 1,4,5-trisphosphate 5-phosphatase family. In terms of assembly, interacts with tyrosine phosphorylated form of SHC1. Interacts with EGFR. Upon stimulation by the EGF signaling pathway, it forms a complex with SHC1 and EGFR. Interacts with cytoskeletal protein SORBS3/vinexin, promoting its localization to the periphery of cells. Forms a complex with filamin (FLNA or FLNB), actin, GPIb (GP1BA or GP1BB) that regulates cortical and submembraneous actin. Interacts with c-Met/MET, when c-Met/MET is phosphorylated on 'Tyr-1356'. Interacts with p130Cas/BCAR1. Interacts with CENTD3/ARAP3 via its SAM domain. Interacts with c-Cbl/CBL and CAP/SORBS1. Interacts with activated EPHA2 receptor. Interacts with receptor FCGR2A. Interacts with receptor FCGR2B. Interacts with tyrosine kinase ABL1. Interacts with tyrosine kinase TEC. Interacts with CSF1R. Interacts (via N-terminus) with SH3YL1 (via SH3 domain). Interacts with FCRL6 (tyrosine phosphorylated form). Interacts (via SH2 domain) with tyrosine phosphorylated KLRC1 (via ITIM). Interacts with NEDD9/HEF1. Post-translationally, tyrosine phosphorylated by the members of the SRC family after exposure to a diverse array of extracellular stimuli such as insulin, growth factors such as EGF or PDGF, chemokines, integrin ligands and hypertonic and oxidative stress. May be phosphorylated upon IgG receptor FCGR2B-binding. Phosphorylated at Tyr-988 following cell attachment and spreading. Phosphorylated at Tyr-1164 following EGF signaling pathway stimulation. As to expression, expressed abundantly in skeletal muscle tissue.

The protein resides in the cytoplasm. The protein localises to the cytosol. It is found in the cytoskeleton. Its subcellular location is the membrane. It localises to the cell projection. The protein resides in the filopodium. The protein localises to the lamellipodium. It is found in the basal cell membrane. Its subcellular location is the nucleus. It localises to the nucleus speckle. The protein resides in the spindle pole. The catalysed reaction is a 1,2-diacyl-sn-glycero-3-phospho-(1D-myo-inositol-3,4,5-trisphosphate) + H2O = a 1,2-diacyl-sn-glycero-3-phospho-(1D-myo-inositol-3,4-bisphosphate) + phosphate. The enzyme catalyses 1,2-dioctanoyl-sn-glycero-3-phospho-(1D-myo-inositol-3,4,5-trisphosphate) + H2O = 1,2-dioctanoyl-sn-glycero-3-phospho-(1D-myo-inositol-3,4-bisphosphate) + phosphate. It catalyses the reaction 1,2-dihexadecanoyl-sn-glycero-3-phospho-(1D-myo-inositol-3,4,5-trisphosphate) + H2O = 1,2-dihexadecanoyl-sn-glycero-3-phospho-(1D-myo-inositol-3,4-bisphosphate) + phosphate. Activated upon translocation to the sites of synthesis of PtdIns(3,4,5)P3 in the membrane. Enzymatic activity is enhanced in the presence of phosphatidylserine. In terms of biological role, phosphatidylinositol (PtdIns) phosphatase that specifically hydrolyzes the 5-phosphate of phosphatidylinositol-3,4,5-trisphosphate (PtdIns(3,4,5)P3) to produce PtdIns(3,4)P2, thereby negatively regulating the PI3K (phosphoinositide 3-kinase) pathways. Required for correct mitotic spindle orientation and therefore progression of mitosis. Plays a central role in regulation of PI3K-dependent insulin signaling, although the precise molecular mechanisms and signaling pathways remain unclear. While overexpression reduces both insulin-stimulated MAP kinase and Akt activation, its absence does not affect insulin signaling or GLUT4 trafficking. Confers resistance to dietary obesity. May act by regulating AKT2, but not AKT1, phosphorylation at the plasma membrane. Part of a signaling pathway that regulates actin cytoskeleton remodeling. Required for the maintenance and dynamic remodeling of actin structures as well as in endocytosis, having a major impact on ligand-induced EGFR internalization and degradation. Participates in regulation of cortical and submembraneous actin by hydrolyzing PtdIns(3,4,5)P3 thereby regulating membrane ruffling. Regulates cell adhesion and cell spreading. Required for HGF-mediated lamellipodium formation, cell scattering and spreading. Acts as a negative regulator of EPHA2 receptor endocytosis by inhibiting via PI3K-dependent Rac1 activation. Acts as a regulator of neuritogenesis by regulating PtdIns(3,4,5)P3 level and is required to form an initial protrusive pattern, and later, maintain proper neurite outgrowth. Acts as a negative regulator of the FC-gamma-RIIA receptor (FCGR2A). Mediates signaling from the FC-gamma-RIIB receptor (FCGR2B), playing a central role in terminating signal transduction from activating immune/hematopoietic cell receptor systems. Involved in EGF signaling pathway. Upon stimulation by EGF, it is recruited by EGFR and dephosphorylates PtdIns(3,4,5)P3. Plays a negative role in regulating the PI3K-PKB pathway, possibly by inhibiting PKB activity. Down-regulates Fc-gamma-R-mediated phagocytosis in macrophages independently of INPP5D/SHIP1. In macrophages, down-regulates NF-kappa-B-dependent gene transcription by regulating macrophage colony-stimulating factor (M-CSF)-induced signaling. Plays a role in the localization of AURKA and NEDD9/HEF1 to the basolateral membrane at interphase in polarized cysts, thereby mediates cell cycle homeostasis, cell polarization and cilia assembly. Additionally promotion of cilia growth is also facilitated by hydrolysis of (PtdIns(3,4,5)P3) to PtdIns(3,4)P2. Promotes formation of apical membrane-initiation sites during the initial stages of lumen formation via Rho family-induced actin filament organization and CTNNB1 localization to cell-cell contacts. May also hydrolyze PtdIns(1,3,4,5)P4, and could thus affect the levels of the higher inositol polyphosphates like InsP6. Involved in endochondral ossification. This chain is Phosphatidylinositol 3,4,5-trisphosphate 5-phosphatase 2, found in Sus scrofa (Pig).